Here is a 316-residue protein sequence, read N- to C-terminus: Phosphatidylinositol mannoside acyltransferase (316 aa).

Histidine 137 (proton acceptor) is an active-site residue. Hexadecanoyl-CoA-binding residues include histidine 137 and arginine 175. The active site involves glutamate 211. Glutamate 240 contacts hexadecanoyl-CoA.

Belongs to the LpxL/LpxM/LpxP family.

It is found in the cell inner membrane. It carries out the reaction a 2,6-O-bis(alpha-D-mannopyranosyl)-1-phosphatidyl-1D-myo-inositol + an acyl-CoA = a 2-O-(alpha-D-mannosyl)-6-O-(6-O-acyl-alpha-D-mannosyl)-1-phosphatidyl-1D-myo-inositol + CoA. The enzyme catalyses a 1,2-diacyl-sn-glycero-3-phospho-[alpha-D-mannopyranosyl-(1&lt;-&gt;6)-D-myo-inositol] + an acyl-CoA = a 1,2-diacyl-sn-glycero-3-phospho-[alpha-D-6-acyl-mannopyranosyl-(1&lt;-&gt;6)-D-myo-inositol] + CoA. Its pathway is phospholipid metabolism; phosphatidylinositol metabolism. Its function is as follows. Catalyzes the transfer of a palmitoyl moiety from palmitoyl-CoA to the 6-position of the mannose ring linked to the 2-position of myo-inositol in phosphatidyl-myo-inositol monomannoside (PIM1) or dimannoside (PIM2). Essential for growth and survival in axenic cultures and during macrophage infection and in a mouse model of infection. In Mycobacterium tuberculosis (strain ATCC 25618 / H37Rv), this protein is Phosphatidylinositol mannoside acyltransferase.